The following is a 29-amino-acid chain: Lambda-theraphotoxin-Ec2a (29 aa).

3 disulfide bridges follow: Cys2–Cys16, Cys9–Cys21, and Cys15–Cys25.

Belongs to the neurotoxin 30 (phrixotoxin) family. Expressed by the venom gland.

It localises to the secreted. Insect-selective neurotoxin that potently blocks insect calcium-activated potassium (BKCa) channels (Slo-type) in cockroach dorsal unpaired median (DUM) neurons (IC(50)=3.7 nM). This occurs in the absence of any shifts in the voltage dependence of activation. At high concentrations (330 nM), it partially inhibits cockroach delayed-rectifier potassium channels (Kv) currents. May interact with the turret and/or loop region of the external entrance to the channel and does not project deeply into the pore of the channel. In vivo, does not show toxicity in mice after intracerebroventricular injection of up to 25 pmol/g (1.8 ug/20 g mouse). This Eucratoscelus constrictus (African red-rump baboon spider) protein is Lambda-theraphotoxin-Ec2a.